The following is a 310-amino-acid chain: Acetylglutamate kinase (310 aa).

Substrate contacts are provided by residues 76–77 (GG), Arg-98, and Asn-203.

Belongs to the acetylglutamate kinase family. ArgB subfamily.

It is found in the cytoplasm. It catalyses the reaction N-acetyl-L-glutamate + ATP = N-acetyl-L-glutamyl 5-phosphate + ADP. It participates in amino-acid biosynthesis; L-arginine biosynthesis; N(2)-acetyl-L-ornithine from L-glutamate: step 2/4. Functionally, catalyzes the ATP-dependent phosphorylation of N-acetyl-L-glutamate. This is Acetylglutamate kinase from Cutibacterium acnes (strain DSM 16379 / KPA171202) (Propionibacterium acnes).